We begin with the raw amino-acid sequence, 147 residues long: Hemoglobin subunit beta-1 (147 aa).

The 145-residue stretch at 3-147 (NLTAKERQLI…IADALGKGYH (145 aa)) folds into the Globin domain. Positions 64 and 93 each coordinate heme b.

Belongs to the globin family. As to quaternary structure, heterotetramer of two alpha chains and two beta chains. Red blood cells.

In terms of biological role, involved in oxygen transport from the lung to the various peripheral tissues. The polypeptide is Hemoglobin subunit beta-1 (hbb1) (Xenopus tropicalis (Western clawed frog)).